A 346-amino-acid chain; its full sequence is UPF0283 membrane protein VP1870 (346 aa).

A disordered region spans residues Met-1–Lys-30. Residues Ser-21 to Lys-30 show a composition bias toward polar residues. The next 2 helical transmembrane spans lie at Val-73–Val-93 and Trp-98–Ile-118.

This sequence belongs to the UPF0283 family.

The protein resides in the cell inner membrane. This is UPF0283 membrane protein VP1870 from Vibrio parahaemolyticus serotype O3:K6 (strain RIMD 2210633).